Reading from the N-terminus, the 379-residue chain is All-trans-retinol dehydrogenase [NAD(+)] ADH4 (379 aa).

Thr1 is modified (N-acetylthreonine). Zn(2+)-binding residues include Cys46, His68, Cys98, Cys101, Cys104, Cys112, and Cys179. Residues 204 to 209 (GLGGVG), Asp228, Lys233, 297 to 299 (VGV), and Arg374 contribute to the NAD(+) site.

Belongs to the zinc-containing alcohol dehydrogenase family. Class-II subfamily. In terms of assembly, homodimer. Zn(2+) is required as a cofactor.

It localises to the cytoplasm. The catalysed reaction is all-trans-retinol + NAD(+) = all-trans-retinal + NADH + H(+). It catalyses the reaction 9-cis-retinol + NAD(+) = 9-cis-retinal + NADH + H(+). It carries out the reaction 20-oxo-(5Z,8Z,11Z,14Z)-eicosatetraenoate + NAD(+) + H2O = (5Z,8Z,11Z,14Z)-eicosatetraenedioate + NADH + 2 H(+). The enzyme catalyses 20-hydroxy-(5Z,8Z,11Z,14Z)-eicosatetraenoate + NAD(+) = 20-oxo-(5Z,8Z,11Z,14Z)-eicosatetraenoate + NADH + H(+). The catalysed reaction is 1,4-benzoquinone + NADH + H(+) = hydroquinone + NAD(+). With respect to regulation, oxidation of 20-HETE is inhibited by low concentrations of N-heptylformamide. Oxidation of 20-HETE is a decreased by 55-65% by either all-trans-retinol or all-trans-retinoic acid. Strongly inhibited by omega-hydroxy fatty acids. In terms of biological role, catalyzes the NAD-dependent oxidation of either all-trans-retinol or 9-cis-retinol. Also oxidizes long chain omega-hydroxy fatty acids, such as 20-HETE, producing both the intermediate aldehyde, 20-oxoarachidonate and the end product, a dicarboxylic acid, (5Z,8Z,11Z,14Z)-eicosatetraenedioate. Also catalyzes the reduction of benzoquinones. This is All-trans-retinol dehydrogenase [NAD(+)] ADH4 from Struthio camelus (Common ostrich).